Here is a 321-residue protein sequence, read N- to C-terminus: Ribosomal RNA small subunit methyltransferase H (321 aa).

S-adenosyl-L-methionine is bound by residues 40–42 (GGH), D60, F84, D106, and Q113.

The protein belongs to the methyltransferase superfamily. RsmH family.

It is found in the cytoplasm. It catalyses the reaction cytidine(1402) in 16S rRNA + S-adenosyl-L-methionine = N(4)-methylcytidine(1402) in 16S rRNA + S-adenosyl-L-homocysteine + H(+). Specifically methylates the N4 position of cytidine in position 1402 (C1402) of 16S rRNA. This Histophilus somni (strain 2336) (Haemophilus somnus) protein is Ribosomal RNA small subunit methyltransferase H.